The sequence spans 185 residues: Ribosome-recycling factor (185 aa).

The protein belongs to the RRF family.

It localises to the cytoplasm. Its function is as follows. Responsible for the release of ribosomes from messenger RNA at the termination of protein biosynthesis. May increase the efficiency of translation by recycling ribosomes from one round of translation to another. In Bacillus cereus (strain ATCC 10987 / NRS 248), this protein is Ribosome-recycling factor.